Here is a 158-residue protein sequence, read N- to C-terminus: Class 10 plant pathogenesis-related protein 2B (158 aa).

D8 is a binding site for trans-zeatin. Residues P32, V35, and I38 each coordinate Ca(2+). 4 residues coordinate trans-zeatin: E60, H69, Y81, and Y83. Y83 is a binding site for melatonin.

This sequence belongs to the BetVI family.

It localises to the cytoplasm. Its subcellular location is the cytosol. Class II ribonuclease (RNase). Binds to several cytokinins including natural adenine-type (e.g. trans-zeatin and kinetin) and artificial urea-type (e.g. N,N'-diphenylurea and N-phenyl-N'-(2-chloro-4-pyridyl)urea) hormones. Interacts with melatonin. The protein is Class 10 plant pathogenesis-related protein 2B of Lupinus luteus (European yellow lupine).